Consider the following 306-residue polypeptide: Recombination-associated protein RdgC (306 aa).

It belongs to the RdgC family.

It is found in the cytoplasm. The protein resides in the nucleoid. Functionally, may be involved in recombination. This Pseudomonas fluorescens (strain Pf0-1) protein is Recombination-associated protein RdgC.